A 147-amino-acid polypeptide reads, in one-letter code: Austinoid biosynthesis clusters protein H (147 aa).

Belongs to the trt14 isomerase family. In terms of assembly, homodimer.

It participates in secondary metabolite biosynthesis; terpenoid biosynthesis. In terms of biological role, part of the gene cluster B that mediates the biosynthesis of the fungal meroterpenoid acetoxydehydroaustin. The first step of the pathway is the synthesis of 3,5-dimethylorsellinic acid by the polyketide synthase ausA. 3,5-dimethylorsellinic acid is then prenylated by the polyprenyl transferase ausN. Further epoxidation by the FAD-dependent monooxygenase ausM and cyclization by the probable terpene cyclase ausL lead to the formation of protoaustinoid A. Protoaustinoid A is then oxidized to spiro-lactone preaustinoid A3 by the combined action of the FAD-binding monooxygenases ausB and ausC, and the dioxygenase ausE. Acid-catalyzed keto-rearrangement and ring contraction of the tetraketide portion of preaustinoid A3 by ausJ lead to the formation of preaustinoid A4. The aldo-keto reductase ausK, with the help of ausH, is involved in the next step by transforming preaustinoid A4 into isoaustinone which is in turn hydroxylated by the P450 monooxygenase ausI to form austinolide. The cytochrome P450 monooxygenase ausG then modifies austinolide to austinol. Austinol is further acetylated to austin by the O-acetyltransferase ausP, which spontaneously changes to dehydroaustin. The cytochrome P450 monooxygenase then converts dehydroaustin is into 7-dehydrodehydroaustin. The hydroxylation catalyzed by ausR permits the second O-acetyltransferase ausQ to add an additional acetyl group to the molecule, leading to the formation of acetoxydehydroaustin. Due to genetic rearrangements of the clusters and the subsequent loss of some enzymes, the end product of the Penicillium brasilianum austinoid biosynthesis clusters is acetoxydehydroaustin. The protein is Austinoid biosynthesis clusters protein H of Penicillium brasilianum.